Here is a 368-residue protein sequence, read N- to C-terminus: Endoglucanase (368 aa).

The N-terminal stretch at 1–21 (MNVLRSGLVTMLLLAAFSVQA) is a signal peptide. Residue glutamate 55 is the Proton donor of the active site. Aspartate 116 functions as the Nucleophile in the catalytic mechanism.

The protein belongs to the glycosyl hydrolase 8 (cellulase D) family.

It localises to the secreted. The enzyme catalyses Endohydrolysis of (1-&gt;4)-beta-D-glucosidic linkages in cellulose, lichenin and cereal beta-D-glucans.. The protein operates within glycan metabolism; bacterial cellulose biosynthesis. Functionally, hydrolyzes carboxymethylcellulose. This chain is Endoglucanase (bcsZ), found in Escherichia coli O157:H7.